The primary structure comprises 435 residues: Trigger factor (435 aa).

In terms of domain architecture, PPIase FKBP-type spans 162–247 (GDRINIDYRG…LSGVESSKLP (86 aa)).

Belongs to the FKBP-type PPIase family. Tig subfamily.

The protein localises to the cytoplasm. It catalyses the reaction [protein]-peptidylproline (omega=180) = [protein]-peptidylproline (omega=0). Its function is as follows. Involved in protein export. Acts as a chaperone by maintaining the newly synthesized protein in an open conformation. Functions as a peptidyl-prolyl cis-trans isomerase. In Nitrosospira multiformis (strain ATCC 25196 / NCIMB 11849 / C 71), this protein is Trigger factor.